We begin with the raw amino-acid sequence, 633 residues long: Endosomal/prevacuolar sodium/hydrogen exchanger (633 aa).

The signal sequence occupies residues 1-21 (MLSKVLLNIAFKVLLTTAKRA). The Lumenal segment spans residues 22-61 (VDPDDDDELLPSPDLPGSDDPIAGDPDVDLNPVTEEMFSS). The tract at residues 25 to 44 (DDDDELLPSPDLPGSDDPIA) is disordered. Residues 31–42 (LPSPDLPGSDDP) show a composition bias toward low complexity. The helical transmembrane segment at 62–82 (WALFIMLLLLISALWSSYYLT) threads the bilayer. The Cytoplasmic portion of the chain corresponds to 83 to 85 (QKR). A helical membrane pass occupies residues 86–106 (IRAVHETVLSIFYGMVIGLII). Topologically, residues 107 to 117 (RMSPGHYIQDT) are lumenal. Residues 118-138 (VTFNSSYFFNVLLPPIILNSG) form a helical membrane-spanning segment. Positions 124 to 133 (YFFNVLLPPI) match the Amiloride-binding motif. The Cytoplasmic portion of the chain corresponds to 139 to 152 (YELNQVNFFNNMLS). A helical transmembrane segment spans residues 153-173 (ILIFAIPGTFISAVVIGIILY). The Lumenal portion of the chain corresponds to 174–189 (IWTFLGLESIDISFAD). The helical transmembrane segment at 190–211 (AMSVGATLSATDPVTILSIFNA) threads the bilayer. Over 212-217 (YKVDPK) the chain is Cytoplasmic. The helical transmembrane segment at 218–238 (LYTIIFGESLLNDAISIVMFE) threads the bilayer. The Lumenal portion of the chain corresponds to 239–258 (TCQKFHGQPATFSSVFEGAG). The helical transmembrane segment at 259–279 (LFLMTFSVSLLIGVLIGILVA) threads the bilayer. Residues 280 to 288 (LLLKHTHIR) lie on the Cytoplasmic side of the membrane. Residues 289–308 (RYPQIESCLILLIAYESYFF) form a helical membrane-spanning segment. Topologically, residues 309–313 (SNGCH) are lumenal. The helical transmembrane segment at 314 to 333 (MSGIVSLLFCGITLKHYAYY) threads the bilayer. The Cytoplasmic portion of the chain corresponds to 334 to 344 (NMSRRSQITIK). The helical transmembrane segment at 345 to 364 (YIFQLLARLSENFIFIYLGL) threads the bilayer. The Cytoplasmic portion of the chain corresponds to 365 to 376 (ELFTEVELVYKP). The chain crosses the membrane as a helical span at residues 377 to 397 (LLIIVAAISICVARWCAVFPL). The Lumenal segment spans residues 398-431 (SQFVNWIYRVKTIRSMSGITGENISVPDEIPYNY). Residue Asn420 is glycosylated (N-linked (GlcNAc...) asparagine). A helical membrane pass occupies residues 432 to 452 (QMMTFWAGLRGAVGVALALGI). Over 453-457 (QGEYK) the chain is Cytoplasmic. A helical transmembrane segment spans residues 458–478 (FTLLATVLVVVVLTVIIFGGT). Residue Thr490 is modified to Phosphothreonine. At Ser494 the chain carries Phosphoserine. Phosphothreonine is present on Thr498. Residue Ser499 is modified to Phosphoserine. N-linked (GlcNAc...) asparagine glycosylation is found at Asn515, Asn550, and Asn563. Residues 553-578 (TTGGNTFGGLNETENTSPNPARSSMD) are disordered. The span at 564-574 (ETENTSPNPAR) shows a compositional bias: polar residues. At Ser569 the chain carries Phosphoserine.

This sequence belongs to the monovalent cation:proton antiporter 1 (CPA1) transporter (TC 2.A.36) family. In terms of assembly, interacts with CYP6.

Its subcellular location is the endosome membrane. The protein resides in the prevacuolar compartment membrane. Endosomal/prevacuolar electroneutral Na(+)/H(+) exchanger which mediates intracellular sequestration of Na(+) cations, regulates vacuolar pH and contributes to osmotolerance following sudden exposure to hyperosmotic media. Also contributes to the postdiauxic/stationary phase resistance to osmotic stress and allows for the continued growth of cells until the acquired osmotolerance response can occur. Involved in hygromycin resistance probably through its influence on the electrochemical proton gradient affecting secondarily the entrance of hygromycin. Mediates pH-dependent vesicle trafficking out of the endosome. Contributes to K(+) sequestration and homeostasis. In Saccharomyces cerevisiae (strain ATCC 204508 / S288c) (Baker's yeast), this protein is Endosomal/prevacuolar sodium/hydrogen exchanger (NHX1).